A 520-amino-acid chain; its full sequence is Cytochrome P450 monooxygenase oblB (520 aa).

The next 3 helical transmembrane spans lie at 17-37 (VAVISAGAFYLLNLVIYRLFL), 229-249 (LFMGLPWLIHVVRLIPVSILA), and 320-340 (IGTGTITTAGSLCFICYHIVV). C462 is a binding site for heme.

The protein belongs to the cytochrome P450 family. It depends on heme as a cofactor.

It is found in the membrane. It functions in the pathway secondary metabolite biosynthesis; terpenoid biosynthesis. Its function is as follows. Cytochrome P450 monooxygenase; part of the gene cluster that mediates the biosynthesis of the sesterterpenes ophiobolins, fungal phytotoxins with potential anti-cancer activities. The first step of the pathway is performed by the sesterterpene synthase oblA that possesses both prenyl transferase and terpene cyclase activity, converting isopentenyl diphosphate and dimethylallyl diphosphate into geranylfarnesyl diphosphate (GFPP) and further converting GFPP into ophiobolin F, respectively. Other sesterterpenoids (C(25) terpenoids) are found as minor products of oblA. It is expected that ophiobolin F is then oxidized to ophiobolin A via ophiobolin C and ophiobolin B intermediates by the combined action of the cytochrome P450 monooxygenase oblB and the FAD-dependent oxidoreductase oblC. Although oblB catalyzes multistep oxygenations at C5 and C21/C7 in a relatively efficient manner, it is unable to convert ophiobolin F to ophiobolin C and produces instead several unexpected derivatives. In Aspergillus clavatus (strain ATCC 1007 / CBS 513.65 / DSM 816 / NCTC 3887 / NRRL 1 / QM 1276 / 107), this protein is Cytochrome P450 monooxygenase oblB.